The chain runs to 379 residues: Leukocyte elastase inhibitor (379 aa).

Met1 carries the post-translational modification N-acetylmethionine. An N6-acetyllysine mark is found at Lys137 and Lys177. Position 300 is a phosphoserine (Ser300). The segment at Asn351–Pro379 is CARD-binding motif (CBM).

It belongs to the serpin family. Ov-serpin subfamily. In terms of assembly, monomer. Interacts (via C-terminus) with CASP1; CASP4 (via CARD domain) and CASP5; these interactions regulate the activity of inflammatory caspases. Interacts with PRTN3. Interacts with GZMH. In terms of tissue distribution, in human bone marrow, present in all CD45+ populations. Expression levels are highest in the neutrophil lineage, intermediate in monocytic, and lowest in lymphocytic lineage. Within the neutrophil lineage, expression is highest in promyelocytes.

It localises to the secreted. The protein resides in the cytoplasm. Its subcellular location is the cytolytic granule. It is found in the early endosome. In terms of biological role, neutrophil serine protease inhibitor that plays an essential role in the regulation of the innate immune response, inflammation and cellular homeostasis. Acts primarily to protect the cell from proteases released in the cytoplasm during stress or infection. These proteases are important in killing microbes but when released from granules, these potent enzymes also destroy host proteins and contribute to mortality. Regulates the activity of the neutrophil proteases elastase, cathepsin G, proteinase-3, chymase, chymotrypsin, and kallikrein-3. Also acts as a potent intracellular inhibitor of GZMH by directly blocking its proteolytic activity. During inflammation, limits the activity of inflammatory caspases CASP1, CASP4 and CASP5 by suppressing their caspase-recruitment domain (CARD) oligomerization and enzymatic activation. When secreted, promotes the proliferation of beta-cells via its protease inhibitory function. The protein is Leukocyte elastase inhibitor (SERPINB1) of Homo sapiens (Human).